An 809-amino-acid chain; its full sequence is MAYKHQIIERKWQHYWRANHTFETSDSQTKPKYYVMDMFPYPSGQGLHVGHPEGYTATDIMARLKRMQGFNVLHPMGWDAFGLPAEQYALKTGHNPKDFTAHNIKNFKRQIRSLGFSYDWSREINTTDESYYKWTQWIFEQLYKKGLAYEDKIMVNWAPDFMGGTVVANEEVIDGKTERGGYPVYRVPMRQWVLKITAYADRLIDDLDDLDWPDSIKEMQRNWIGRSEGASVFFPVDGQADTKIEVYTTRPDTLFGATYMVLAPEHAAVAKITTPEQADAVKAYQEAIESKSDLERTDLNKDKTGVFTGAYGINPLSGKKLPIWIGDYVLSSYGTGAIMAVPAHDERDHEFATKFNLPITQVIEGDADTDITEAAYTDDGKHINSDFMNGMDKQTAISAAIDWLTEHDAGHKQVNFRLRDWIFSRQRYWGEPIPVIHWENGETTLVPEDELPLKLPAAKQLEPSGTGESPLANLDDWVNVVDENGRKGKRETNTMPQWAGSSWYFLRYVDPTNDQAIADPEKLKYWMPVDLYIGGAEHAVLHLLYARFWHKFLYDLGVVPTKEPFQKLVNQGMILGTNHEKMSKSKGNVINPDEIVEKHGADTLRLYEMFMGPLEASKPWSTEGINGSRRWLDRVWRLLIDDNNRLRDRVTMINDGALDKIYNQTVKTVTEDLEAMRFNVAISQLMVFVNEAYKVDSLPMIYMEGFVKLISPIVPHIAEELWSLLGHDETIAYAKWPTYDAKQLVEDVVELVVQVNGKVRAHLKVAKDATKDAIEAAALADETVQVHTDGKTVRKVIVVPGKLVNIVAN.

The 'HIGH' region motif lies at 40 to 51 (PYPSGQGLHVGH). The 'KMSKS' region signature appears at 581-585 (KMSKS). Lys-584 is an ATP binding site.

Belongs to the class-I aminoacyl-tRNA synthetase family.

It localises to the cytoplasm. The catalysed reaction is tRNA(Leu) + L-leucine + ATP = L-leucyl-tRNA(Leu) + AMP + diphosphate. The protein is Leucine--tRNA ligase of Levilactobacillus brevis (strain ATCC 367 / BCRC 12310 / CIP 105137 / JCM 1170 / LMG 11437 / NCIMB 947 / NCTC 947) (Lactobacillus brevis).